The primary structure comprises 308 residues: Glutaminase (308 aa).

Substrate-binding residues include Ser-68, Asn-118, Glu-162, Asn-169, Tyr-193, Tyr-244, and Val-262.

Belongs to the glutaminase family. In terms of assembly, homotetramer.

The catalysed reaction is L-glutamine + H2O = L-glutamate + NH4(+). The chain is Glutaminase from Hahella chejuensis (strain KCTC 2396).